Consider the following 118-residue polypeptide: Small ribosomal subunit protein uS13 (118 aa).

The interval 97-118 is disordered; the sequence is VRGQRTKTNARTCKGPRKAIKK.

The protein belongs to the universal ribosomal protein uS13 family. In terms of assembly, part of the 30S ribosomal subunit. Forms a loose heterodimer with protein S19. Forms two bridges to the 50S subunit in the 70S ribosome.

Its function is as follows. Located at the top of the head of the 30S subunit, it contacts several helices of the 16S rRNA. In the 70S ribosome it contacts the 23S rRNA (bridge B1a) and protein L5 of the 50S subunit (bridge B1b), connecting the 2 subunits; these bridges are implicated in subunit movement. Contacts the tRNAs in the A and P-sites. This chain is Small ribosomal subunit protein uS13, found in Buchnera aphidicola subsp. Schizaphis graminum (strain Sg).